We begin with the raw amino-acid sequence, 1211 residues long: DNA-directed RNA polymerase subunit beta' (1211 aa).

The Zn(2+) site is built by C60, C62, C75, and C78. Positions 450, 452, and 454 each coordinate Mg(2+). Zn(2+)-binding residues include C819, C893, C900, and C903.

Belongs to the RNA polymerase beta' chain family. In terms of assembly, the RNAP catalytic core consists of 2 alpha, 1 beta, 1 beta' and 1 omega subunit. When a sigma factor is associated with the core the holoenzyme is formed, which can initiate transcription. It depends on Mg(2+) as a cofactor. The cofactor is Zn(2+).

It carries out the reaction RNA(n) + a ribonucleoside 5'-triphosphate = RNA(n+1) + diphosphate. In terms of biological role, DNA-dependent RNA polymerase catalyzes the transcription of DNA into RNA using the four ribonucleoside triphosphates as substrates. The polypeptide is DNA-directed RNA polymerase subunit beta' (Streptococcus equi subsp. zooepidemicus (strain H70)).